Reading from the N-terminus, the 611-residue chain is UvrABC system protein C (611 aa).

The 78-residue stretch at 14–91 (TSPGCYIHKD…IKENQPKYNI (78 aa)) folds into the GIY-YIG domain. Residues 196-231 (DQIIEDLRGKMAGAAQAMEFEKAAEYRDLIQSIGTL) enclose the UVR domain. A disordered region spans residues 587-611 (KLNPKTQEQEQAQLREVAEPQIGLE).

The protein belongs to the UvrC family. In terms of assembly, interacts with UvrB in an incision complex.

The protein localises to the cytoplasm. In terms of biological role, the UvrABC repair system catalyzes the recognition and processing of DNA lesions. UvrC both incises the 5' and 3' sides of the lesion. The N-terminal half is responsible for the 3' incision and the C-terminal half is responsible for the 5' incision. The chain is UvrABC system protein C from Streptococcus sanguinis (strain SK36).